The primary structure comprises 44 residues: Photosystem I reaction center subunit IX (44 aa).

The helical transmembrane segment at 7–27 threads the bilayer; the sequence is YLSVAPVLSTLWFGALAGLLI.

This sequence belongs to the PsaJ family.

It localises to the plastid. It is found in the chloroplast thylakoid membrane. In terms of biological role, may help in the organization of the PsaE and PsaF subunits. This chain is Photosystem I reaction center subunit IX, found in Eucalyptus globulus subsp. globulus (Tasmanian blue gum).